Consider the following 81-residue polypeptide: Photosystem I iron-sulfur center (81 aa).

4Fe-4S ferredoxin-type domains lie at 2-31 (SHAV…MVPW) and 39-68 (IASS…IRVY). [4Fe-4S] cluster is bound by residues Cys11, Cys14, Cys17, Cys21, Cys48, Cys51, Cys54, and Cys58.

The cyanobacterial PSI reaction center is composed of one copy each of PsaA,B,C,D,E,F,I,J,K,L,M and X, and forms trimeric complexes. [4Fe-4S] cluster serves as cofactor.

The protein resides in the cellular thylakoid membrane. The catalysed reaction is reduced [plastocyanin] + hnu + oxidized [2Fe-2S]-[ferredoxin] = oxidized [plastocyanin] + reduced [2Fe-2S]-[ferredoxin]. Apoprotein for the two 4Fe-4S centers FA and FB of photosystem I (PSI); essential for photochemical activity. FB is the terminal electron acceptor of PSI, donating electrons to ferredoxin. The C-terminus interacts with PsaA/B/D and helps assemble the protein into the PSI complex. Required for binding of PsaD and PsaE to PSI. PSI is a plastocyanin/cytochrome c6-ferredoxin oxidoreductase, converting photonic excitation into a charge separation, which transfers an electron from the donor P700 chlorophyll pair to the spectroscopically characterized acceptors A0, A1, FX, FA and FB in turn. This Prochlorococcus marinus (strain MIT 9211) protein is Photosystem I iron-sulfur center.